Consider the following 313-residue polypeptide: Small ribosomal subunit biogenesis GTPase RsgA (313 aa).

Positions 82–235 (REKLIAANAT…IIDSPGIQQF (154 aa)) constitute a CP-type G domain. GTP contacts are provided by residues 127-130 (NKTD) and 177-185 (GQSGMGKST). Zn(2+) contacts are provided by C259, C264, H266, and C272.

It belongs to the TRAFAC class YlqF/YawG GTPase family. RsgA subfamily. Monomer. Associates with 30S ribosomal subunit, binds 16S rRNA. The cofactor is Zn(2+).

It is found in the cytoplasm. In terms of biological role, one of several proteins that assist in the late maturation steps of the functional core of the 30S ribosomal subunit. Helps release RbfA from mature subunits. May play a role in the assembly of ribosomal proteins into the subunit. Circularly permuted GTPase that catalyzes slow GTP hydrolysis, GTPase activity is stimulated by the 30S ribosomal subunit. This Nitrosospira multiformis (strain ATCC 25196 / NCIMB 11849 / C 71) protein is Small ribosomal subunit biogenesis GTPase RsgA.